The chain runs to 462 residues: Tissue alpha-L-fucosidase (462 aa).

The N-terminal stretch at 1–28 (MWDLKSEWWAVGFGLLLLLAASAQAGGL) is a signal peptide. 3 N-linked (GlcNAc...) asparagine glycosylation sites follow: N237, N264, and N378.

It belongs to the glycosyl hydrolase 29 family. Homotetramer.

The protein localises to the lysosome. It carries out the reaction an alpha-L-fucoside + H2O = L-fucose + an alcohol. The enzyme catalyses a neolactoside IV(2)-alpha-Fuc-nLc4Cer(d18:1(4E)) + H2O = a neolactoside nLc4Cer(d18:1(4E)) + L-fucose. It catalyses the reaction a neolactoside IV(2)-alpha-Fuc-nLc4Cer(d18:0) + H2O = a neolactoside nLc4Cer(d18:0) + L-fucose. Alpha-L-fucosidase is responsible for hydrolyzing the alpha-1,6-linked fucose joined to the reducing-end N-acetylglucosamine of the carbohydrate moieties of glycoproteins. The polypeptide is Tissue alpha-L-fucosidase (Fuca1) (Rattus norvegicus (Rat)).